Reading from the N-terminus, the 180-residue chain is Endogenous alpha-amylase/subtilisin inhibitor (180 aa).

2 cysteine pairs are disulfide-bonded: C42-C89 and C143-C147.

The protein belongs to the protease inhibitor I3 (leguminous Kunitz-type inhibitor) family.

Functionally, inhibitor of endogenous alpha-amylase (wheat also produces an exogenous inhibitor which inactivates alpha-amylase from animal and insect origin). This inhibitor can also inhibit subtilisin. This is Endogenous alpha-amylase/subtilisin inhibitor from Triticum aestivum (Wheat).